The following is a 588-amino-acid chain: Phosphomethylpyrimidine synthase (588 aa).

Substrate is bound by residues N212, M241, Y270, H306, 326 to 328 (SRG), 367 to 370 (DGLR), and E406. H410 contacts Zn(2+). Y433 contacts substrate. Residue H474 coordinates Zn(2+). 3 residues coordinate [4Fe-4S] cluster: C554, C557, and C562.

It belongs to the ThiC family. In terms of assembly, homodimer. It depends on [4Fe-4S] cluster as a cofactor.

The catalysed reaction is 5-amino-1-(5-phospho-beta-D-ribosyl)imidazole + S-adenosyl-L-methionine = 4-amino-2-methyl-5-(phosphooxymethyl)pyrimidine + CO + 5'-deoxyadenosine + formate + L-methionine + 3 H(+). Its pathway is cofactor biosynthesis; thiamine diphosphate biosynthesis. Functionally, catalyzes the synthesis of the hydroxymethylpyrimidine phosphate (HMP-P) moiety of thiamine from aminoimidazole ribotide (AIR) in a radical S-adenosyl-L-methionine (SAM)-dependent reaction. In Bartonella quintana (strain Toulouse) (Rochalimaea quintana), this protein is Phosphomethylpyrimidine synthase.